The following is a 77-amino-acid chain: Acyl carrier protein (77 aa).

Residues Ala2–Ala77 enclose the Carrier domain. Ser37 carries the post-translational modification O-(pantetheine 4'-phosphoryl)serine.

It belongs to the acyl carrier protein (ACP) family. In terms of processing, 4'-phosphopantetheine is transferred from CoA to a specific serine of apo-ACP by AcpS. This modification is essential for activity because fatty acids are bound in thioester linkage to the sulfhydryl of the prosthetic group.

Its subcellular location is the cytoplasm. The protein operates within lipid metabolism; fatty acid biosynthesis. In terms of biological role, carrier of the growing fatty acid chain in fatty acid biosynthesis. This Listeria innocua serovar 6a (strain ATCC BAA-680 / CLIP 11262) protein is Acyl carrier protein.